Consider the following 168-residue polypeptide: Protein A40 (168 aa).

The Cytoplasmic portion of the chain corresponds to Met1–Ala9. A helical; Signal-anchor for type II membrane protein transmembrane segment spans residues Gly10–Leu30. Residues Lys31–Gly168 are Extracellular-facing. The region spanning Tyr63–Gly168 is the C-type lectin domain.

Belongs to the poxviridae A40 protein family.

Its subcellular location is the host membrane. The sequence is that of Protein A40 from Homo sapiens (Human).